The following is a 326-amino-acid chain: Balbiani ring protein 1 (326 aa).

Low complexity predominate over residues 1-33 (PSKSGPRPSKSGPRPSKSGPRPSKSGPRPSKSG). A disordered region spans residues 1–119 (PSKSGPRPSK…RESPVCDDAM (119 aa)). A compositionally biased stretch (basic and acidic residues) spans 34–51 (PRPEKCGSAMRKAEAEKC). The span at 93 to 102 (VTPTPEVPTT) shows a compositional bias: low complexity. A compositionally biased stretch (basic and acidic residues) spans 107–119 (SESRESPVCDDAM).

In terms of tissue distribution, salivary gland.

It is found in the secreted. Used by the larvae to construct a supramolecular structure, the larval tube. The protein is Balbiani ring protein 1 (BR1) of Chironomus pallidivittatus (Midge).